Here is a 337-residue protein sequence, read N- to C-terminus: Putative [LysW]-lysine/[LysW]-ornithine hydrolase (337 aa).

Histidine 67 serves as a coordination point for Zn(2+). Residue aspartate 69 is part of the active site. Aspartate 91 provides a ligand contact to Zn(2+). The active-site Proton acceptor is the glutamate 118. Residues glutamate 119, glutamate 140, and histidine 298 each coordinate Zn(2+).

It belongs to the peptidase M20A family. LysK subfamily. It depends on Zn(2+) as a cofactor. The cofactor is Co(2+).

It localises to the cytoplasm. It catalyses the reaction [amino-group carrier protein]-C-terminal-gamma-(L-lysyl)-L-glutamate + H2O = [amino-group carrier protein]-C-terminal-L-glutamate + L-lysine. The enzyme catalyses [amino-group carrier protein]-C-terminal-gamma-(L-ornithyl)-L-glutamate + H2O = [amino-group carrier protein]-C-terminal-L-glutamate + L-ornithine. Its pathway is amino-acid biosynthesis; L-lysine biosynthesis via AAA pathway; L-lysine from L-alpha-aminoadipate (Thermus route): step 5/5. The protein operates within amino-acid biosynthesis; L-arginine biosynthesis. Catalyzes the release of L-lysine from [LysW]-gamma-L-lysine and the release of L-ornithine from [LysW]-L-ornithine. The polypeptide is Putative [LysW]-lysine/[LysW]-ornithine hydrolase (Pyrococcus abyssi (strain GE5 / Orsay)).